We begin with the raw amino-acid sequence, 701 residues long: DNA ligase (701 aa).

NAD(+)-binding positions include 50–54 (DYEYD), 99–100 (SL), and Glu-130. Catalysis depends on Lys-132, which acts as the N6-AMP-lysine intermediate. 4 residues coordinate NAD(+): Arg-153, Glu-187, Lys-301, and Lys-325. 4 residues coordinate Zn(2+): Cys-419, Cys-422, Cys-437, and Cys-442. The 76-residue stretch at 626 to 701 (NEHQKYMNKT…EIITEPFWDN (76 aa)) folds into the BRCT domain.

The protein belongs to the NAD-dependent DNA ligase family. LigA subfamily. The cofactor is Mg(2+). Requires Mn(2+) as cofactor.

It catalyses the reaction NAD(+) + (deoxyribonucleotide)n-3'-hydroxyl + 5'-phospho-(deoxyribonucleotide)m = (deoxyribonucleotide)n+m + AMP + beta-nicotinamide D-nucleotide.. DNA ligase that catalyzes the formation of phosphodiester linkages between 5'-phosphoryl and 3'-hydroxyl groups in double-stranded DNA using NAD as a coenzyme and as the energy source for the reaction. It is essential for DNA replication and repair of damaged DNA. In Malacoplasma penetrans (strain HF-2) (Mycoplasma penetrans), this protein is DNA ligase.